Consider the following 418-residue polypeptide: Alpha-tubulin N-acetyltransferase 1 (418 aa).

An N-acetyltransferase domain is found at 1 to 186 (MEFEFDVHKI…NNFVVFEGFF (186 aa)). Acetyl-CoA-binding positions include 120-133 (FYIH…GFGK) and 156-165 (SEKFLSFLRK). Disordered regions lie at residues 237 to 292 (SSLG…MNLS) and 322 to 353 (QIKE…HQND). The span at 277-287 (QEDHSQRRRTS) shows a compositional bias: basic and acidic residues. Residues 329–353 (RTDSSAQEGRTQDRPNGSNSQHQND) show a composition bias toward polar residues.

The protein belongs to the acetyltransferase ATAT1 family.

Its subcellular location is the cytoplasm. The protein resides in the membrane. It is found in the clathrin-coated pit. The protein localises to the cell junction. It localises to the focal adhesion. Its subcellular location is the cell projection. The protein resides in the axon. It is found in the cytoskeleton. The protein localises to the spindle. The catalysed reaction is L-lysyl-[alpha-tubulin] + acetyl-CoA = N(6)-acetyl-L-lysyl-[alpha-tubulin] + CoA + H(+). Specifically acetylates 'Lys-40' in alpha-tubulin on the lumenal side of microtubules. Promotes microtubule destabilization and accelerates microtubule dynamics; this activity may be independent of acetylation activity. Acetylates alpha-tubulin with a slow enzymatic rate, due to a catalytic site that is not optimized for acetyl transfer. Enters the microtubule through each end and diffuses quickly throughout the lumen of microtubules. Acetylates only long/old microtubules because of its slow acetylation rate since it does not have time to act on dynamically unstable microtubules before the enzyme is released. May be involved in neuron development. In Xenopus laevis (African clawed frog), this protein is Alpha-tubulin N-acetyltransferase 1.